We begin with the raw amino-acid sequence, 129 residues long: CD59B glycoprotein (129 aa).

The N-terminal stretch at 1–23 (MRAQRGLILLLLLLAVFCSTAVS) is a signal peptide. The 84-residue stretch at 24 to 107 (LKCYNCLDPV…GLEEPNNAET (84 aa)) folds into the UPAR/Ly6 domain. 5 disulfides stabilise this stretch: cysteine 26–cysteine 49, cysteine 29–cysteine 36, cysteine 42–cysteine 62, cysteine 68–cysteine 86, and cysteine 87–cysteine 92. Asparagine 39 is a glycosylation site (N-linked (GlcNAc...) asparagine). Asparagine 104 carries the GPI-anchor amidated asparagine lipid modification. Positions 105–129 (AETSSLRKTALLGTSVLVAILKFCF) are cleaved as a propeptide — removed in mature form.

Interacts with T-cell surface antigen CD2. In terms of processing, N- and O-glycosylated. As to expression, widely expressed in the kidneys, brain, lungs, spleen and testis Testis-specific.

It is found in the cell membrane. Its subcellular location is the secreted. Functionally, potent inhibitor of the complement membrane attack complex (MAC) action, which protects self-cells from damage during complement activation. Acts by binding to the beta-haipins of C8 (C8A and C8B) components of the assembling MAC, forming an intermolecular beta-sheet that prevents incorporation of the multiple copies of C9 required for complete formation of the osmolytic pore. This is CD59B glycoprotein from Mus musculus (Mouse).